A 222-amino-acid chain; its full sequence is MAYSIEVNEIADGWKKLVEKIMHDGREIRDERGSLTREVMNTVVTIKKPLGKSDDFYHIRRGSLLNIKVPEGYFWSGEKLEKYSEQFLSGDRKGFVYTYGNRLRAHFGVDQLDEAIRRLKNCTESRRATMVTWDPPEDTASDEVPCMILVDFKIRDGRLFTTALWRSHDIYGAWFPNAVGLAYLADHVAAEVGVEVGHITIHSISAHIYEVNFKEAEEVIKW.

The active site involves Cys146.

It belongs to the thymidylate synthase family. Archaeal-type ThyA subfamily. In terms of assembly, monomer.

It localises to the cytoplasm. It functions in the pathway pyrimidine metabolism; dTTP biosynthesis. Its function is as follows. May catalyze the biosynthesis of dTMP using an unknown cosubstrate. The sequence is that of Putative thymidylate synthase from Methanothermobacter thermautotrophicus (strain ATCC 29096 / DSM 1053 / JCM 10044 / NBRC 100330 / Delta H) (Methanobacterium thermoautotrophicum).